The chain runs to 161 residues: Stress response protein YvgO (161 aa).

The signal sequence occupies residues 1-26 (MKRIRIPMTLALGAALTIAPLSFASA).

The polypeptide is Stress response protein YvgO (yvgO) (Bacillus subtilis (strain 168)).